A 236-amino-acid polypeptide reads, in one-letter code: Leucyl/phenylalanyl-tRNA--protein transferase (236 aa).

This sequence belongs to the L/F-transferase family.

It is found in the cytoplasm. It catalyses the reaction N-terminal L-lysyl-[protein] + L-leucyl-tRNA(Leu) = N-terminal L-leucyl-L-lysyl-[protein] + tRNA(Leu) + H(+). It carries out the reaction N-terminal L-arginyl-[protein] + L-leucyl-tRNA(Leu) = N-terminal L-leucyl-L-arginyl-[protein] + tRNA(Leu) + H(+). The enzyme catalyses L-phenylalanyl-tRNA(Phe) + an N-terminal L-alpha-aminoacyl-[protein] = an N-terminal L-phenylalanyl-L-alpha-aminoacyl-[protein] + tRNA(Phe). Functionally, functions in the N-end rule pathway of protein degradation where it conjugates Leu, Phe and, less efficiently, Met from aminoacyl-tRNAs to the N-termini of proteins containing an N-terminal arginine or lysine. In Shewanella pealeana (strain ATCC 700345 / ANG-SQ1), this protein is Leucyl/phenylalanyl-tRNA--protein transferase.